A 145-amino-acid polypeptide reads, in one-letter code: Transcriptional regulator MraZ (145 aa).

2 SpoVT-AbrB domains span residues 7-54 (NATN…GPDL) and 83-126 (GVFM…QPQA).

The protein belongs to the MraZ family. In terms of assembly, forms oligomers.

The protein localises to the cytoplasm. It is found in the nucleoid. The protein is Transcriptional regulator MraZ of Rhizobium johnstonii (strain DSM 114642 / LMG 32736 / 3841) (Rhizobium leguminosarum bv. viciae).